Consider the following 412-residue polypeptide: Nuclear hormone receptor family member nhr-61 (412 aa).

The span at 1–19 (MIVDSISSSTASTSSSSPT) shows a compositional bias: low complexity. Residues 1–23 (MIVDSISSSTASTSSSSPTRGTP) are disordered. The nuclear receptor DNA-binding region spans 27 to 102 (SLQCAVCGDV…VGMNPRAVQG (76 aa)). 2 consecutive NR C4-type zinc fingers follow at residues 30-50 (CAVC…CNGC) and 66-90 (CRHG…LTRC). Positions 144–407 (KKEQIIDNLR…DWSQELRDHR (264 aa)) constitute an NR LBD domain.

Belongs to the nuclear hormone receptor family.

It is found in the nucleus. Orphan nuclear receptor. This Caenorhabditis elegans protein is Nuclear hormone receptor family member nhr-61 (nhr-61).